Reading from the N-terminus, the 98-residue chain is UPF0473 protein GTNG_2486 (98 aa).

It belongs to the UPF0473 family.

This is UPF0473 protein GTNG_2486 from Geobacillus thermodenitrificans (strain NG80-2).